The chain runs to 393 residues: Arrestin-C (393 aa).

Over residues 371–386 the composition is skewed to basic and acidic residues; the sequence is FARQEDGGEEKQKALA. The tract at residues 371 to 393 is disordered; it reads FARQEDGGEEKQKALAEEGDEGS.

It belongs to the arrestin family. Homodimer; disulfide-linked in response to retinal illumination. Interacts with CXCR4; the interaction is dependent on the C-terminal phosphorylation of CXCR4 and modulates the calcium ion mobilization activity of CXCR4.

It is found in the photoreceptor inner segment. The protein resides in the cell projection. The protein localises to the cilium. Its subcellular location is the photoreceptor outer segment. May play a role in an as yet undefined retina-specific signal transduction. Could bind to photoactivated-phosphorylated red/green opsins. This chain is Arrestin-C (ARR3), found in Ictidomys tridecemlineatus (Thirteen-lined ground squirrel).